Here is a 323-residue protein sequence, read N- to C-terminus: Coiled-coil domain-containing protein 160 (323 aa).

Positions 1–81 are disordered; the sequence is MDARRKHWKD…EGEQDSNLRE (81 aa). Over residues 48–58 the composition is skewed to polar residues; that stretch reads SNFSVRNTQEG. Positions 144-289 form a coiled coil; sequence LRLHLLNEEL…IKNELRVEKT (146 aa).

Belongs to the CCDC160 family.

This is Coiled-coil domain-containing protein 160 (Ccdc160) from Mus musculus (Mouse).